The chain runs to 334 residues: Glycerol-3-phosphate dehydrogenase [NAD(P)+] (334 aa).

NADPH contacts are provided by Ser11, Trp12, Arg32, and Lys106. Positions 106 and 136 each coordinate sn-glycerol 3-phosphate. Ala140 contacts NADPH. Lys191, Asp244, Ser254, Arg255, and Asn256 together coordinate sn-glycerol 3-phosphate. Residue Lys191 is the Proton acceptor of the active site. Arg255 provides a ligand contact to NADPH. Residues Val279 and Glu281 each contribute to the NADPH site.

The protein belongs to the NAD-dependent glycerol-3-phosphate dehydrogenase family.

The protein localises to the cytoplasm. The catalysed reaction is sn-glycerol 3-phosphate + NAD(+) = dihydroxyacetone phosphate + NADH + H(+). The enzyme catalyses sn-glycerol 3-phosphate + NADP(+) = dihydroxyacetone phosphate + NADPH + H(+). The protein operates within membrane lipid metabolism; glycerophospholipid metabolism. Catalyzes the reduction of the glycolytic intermediate dihydroxyacetone phosphate (DHAP) to sn-glycerol 3-phosphate (G3P), the key precursor for phospholipid synthesis. This is Glycerol-3-phosphate dehydrogenase [NAD(P)+] from Parafrankia sp. (strain EAN1pec).